Here is a 508-residue protein sequence, read N- to C-terminus: Glycerol kinase (508 aa).

Thr14 contacts ADP. Positions 14, 15, and 16 each coordinate ATP. Thr14 contributes to the sn-glycerol 3-phosphate binding site. Arg18 serves as a coordination point for ADP. 4 residues coordinate sn-glycerol 3-phosphate: Arg84, Glu85, Tyr136, and Asp245. Residues Arg84, Glu85, Tyr136, Asp245, and Gln246 each coordinate glycerol. Residues Thr267 and Gly314 each contribute to the ADP site. ATP is bound by residues Thr267, Gly314, Gln318, and Gly415. ADP contacts are provided by Gly415 and Asn419.

It belongs to the FGGY kinase family.

It carries out the reaction glycerol + ATP = sn-glycerol 3-phosphate + ADP + H(+). Its pathway is polyol metabolism; glycerol degradation via glycerol kinase pathway; sn-glycerol 3-phosphate from glycerol: step 1/1. Inhibited by fructose 1,6-bisphosphate (FBP). Functionally, key enzyme in the regulation of glycerol uptake and metabolism. Catalyzes the phosphorylation of glycerol to yield sn-glycerol 3-phosphate. The chain is Glycerol kinase from Bordetella parapertussis (strain 12822 / ATCC BAA-587 / NCTC 13253).